A 372-amino-acid chain; its full sequence is Queuine tRNA-ribosyltransferase (372 aa).

Catalysis depends on aspartate 89, which acts as the Proton acceptor. Residues 89 to 93 (DSGGF), aspartate 161, and glycine 232 contribute to the substrate site. The tract at residues 262-268 (GIGDLPS) is RNA binding. The active-site Nucleophile is the aspartate 281. An RNA binding; important for wobble base 34 recognition region spans residues 286–290 (TKAAR). The Zn(2+) site is built by cysteine 319, cysteine 321, cysteine 324, and histidine 351.

The protein belongs to the queuine tRNA-ribosyltransferase family. In terms of assembly, homodimer. Within each dimer, one monomer is responsible for RNA recognition and catalysis, while the other monomer binds to the replacement base PreQ1. Requires Zn(2+) as cofactor.

The catalysed reaction is 7-aminomethyl-7-carbaguanine + guanosine(34) in tRNA = 7-aminomethyl-7-carbaguanosine(34) in tRNA + guanine. It participates in tRNA modification; tRNA-queuosine biosynthesis. Its function is as follows. Catalyzes the base-exchange of a guanine (G) residue with the queuine precursor 7-aminomethyl-7-deazaguanine (PreQ1) at position 34 (anticodon wobble position) in tRNAs with GU(N) anticodons (tRNA-Asp, -Asn, -His and -Tyr). Catalysis occurs through a double-displacement mechanism. The nucleophile active site attacks the C1' of nucleotide 34 to detach the guanine base from the RNA, forming a covalent enzyme-RNA intermediate. The proton acceptor active site deprotonates the incoming PreQ1, allowing a nucleophilic attack on the C1' of the ribose to form the product. After dissociation, two additional enzymatic reactions on the tRNA convert PreQ1 to queuine (Q), resulting in the hypermodified nucleoside queuosine (7-(((4,5-cis-dihydroxy-2-cyclopenten-1-yl)amino)methyl)-7-deazaguanosine). This Chlamydia pneumoniae (Chlamydophila pneumoniae) protein is Queuine tRNA-ribosyltransferase.